We begin with the raw amino-acid sequence, 347 residues long: Dihydroorotase (347 aa).

Zn(2+)-binding residues include H14 and H16. Substrate contacts are provided by residues 16–18 (HLR) and N42. Zn(2+)-binding residues include K100, H137, and H175. K100 is subject to N6-carboxylysine. H137 contacts substrate. Substrate is bound at residue L220. D248 is a binding site for Zn(2+). D248 is an active-site residue. Residues H252 and A264 each contribute to the substrate site.

The protein belongs to the metallo-dependent hydrolases superfamily. DHOase family. Class II DHOase subfamily. Homodimer. Zn(2+) serves as cofactor.

It carries out the reaction (S)-dihydroorotate + H2O = N-carbamoyl-L-aspartate + H(+). The protein operates within pyrimidine metabolism; UMP biosynthesis via de novo pathway; (S)-dihydroorotate from bicarbonate: step 3/3. Functionally, catalyzes the reversible cyclization of carbamoyl aspartate to dihydroorotate. The chain is Dihydroorotase from Pseudomonas syringae pv. tomato (strain ATCC BAA-871 / DC3000).